The sequence spans 214 residues: EEF1A lysine methyltransferase 1 (214 aa).

Ser2 carries the post-translational modification N-acetylserine. Ser2 bears the Phosphoserine mark.

It belongs to the class I-like SAM-binding methyltransferase superfamily. EFM5 family.

It localises to the cytoplasm. It catalyses the reaction L-lysyl-[protein] + 3 S-adenosyl-L-methionine = N(6),N(6),N(6)-trimethyl-L-lysyl-[protein] + 3 S-adenosyl-L-homocysteine + 3 H(+). Protein-lysine methyltransferase that selectively catalyzes the trimethylation of EEF1A at 'Lys-79'. The sequence is that of EEF1A lysine methyltransferase 1 from Mus musculus (Mouse).